The primary structure comprises 1350 residues: uncharacterized protein (1350 aa).

Disordered regions lie at residues 348–371 (SLVG…LDDS) and 923–944 (SKME…RGTG). A compositionally biased stretch (basic and acidic residues) spans 923 to 932 (SKMEGGERDA).

This is an uncharacterized protein from Ictalurid herpesvirus 1 (strain Auburn) (IcHV-1).